A 728-amino-acid polypeptide reads, in one-letter code: MVAVAAAAASRATAESEPEWNVAAPDLLYAEGTAAYARGDWPGVVLNMERALRSRAALRALRLRCRTRCATELPWAPDLDLGPASSLNHDPGAAALHDLRFFGALLRRAACLRRCLGPPSAHLLSEELDLEFNKRSPYNYLQVAYFKINKLEKAVAAAHTFFVGNPEHMEMRQNLDYYQTMSGVKEEDFKDLEAKPHMHEFRLGVRLYSEEKPLEAVPHLEAALQEYFVADEECRALCEGPYDYDGYNYLDYSADLFQAITDHYVQVLSCKQNCVTELASHPSREKPFEDFLPSHYNYLQFAYYNIGNYTQAIECAKTYLLFFPNDEVMSQNLAYYTAVLGEEEASSISPRENAQEYRHRSLLEKELLFFAYDIFGIPFVDPDSWTPEEVIPKRLQEKQKSERETAVRISQEIGNLMKEIETLVEEKTKESLDVSRLTREGGPLLYEGINLTMNSKVLNGSQRVVMDGVISDDECQELQRLTNAAATSGDGYRGQTSPHTPNEKFYGVTVLKALKLGQEGKVPLQSAHMYYNVTEKVRRVMESYFRLDTPLYFSYSHLVCRTAIEESQAERKDSSHPVHVDNCILNAESLVCIKEPPAYTFRDYSAILYLNGDFDGGNFYFTELDAKTVTAEVQPQCGRAVGFSSGTENPHGVKAVTRGQRCAIALWFTLDPRHSERDRVQADDLVKMLFSPEEVDLPQEQPLPDQQGSPKPGEESLSDRESQPKDEL.

Positions 1–14 (MVAVAAAAASRATA) are cleaved as a signal peptide. TPR repeat units lie at residues 25-58 (PDLL…RAAL), 135-168 (RSPY…NPEH), 197-230 (HMHE…YFVA), and 293-326 (PSHY…FPND). N-linked (GlcNAc...) asparagine glycosylation is present at asparagine 308. A coiled-coil region spans residues 393-431 (KRLQEKQKSERETAVRISQEIGNLMKEIETLVEEKTKES). N-linked (GlcNAc...) asparagine glycans are attached at residues asparagine 450, asparagine 459, and asparagine 532. The Fe2OG dioxygenase domain occupies 556 to 670 (SHLVCRTAIE…RCAIALWFTL (115 aa)). Residues histidine 579, aspartate 581, and histidine 651 each contribute to the Fe cation site. Arginine 661 is an active-site residue. The tract at residues 691 to 728 (SPEEVDLPQEQPLPDQQGSPKPGEESLSDRESQPKDEL) is disordered. The span at 698–707 (PQEQPLPDQQ) shows a compositional bias: low complexity. Positions 712 to 728 (PGEESLSDRESQPKDEL) are enriched in basic and acidic residues. The Prevents secretion from ER signature appears at 725 to 728 (KDEL).

Belongs to the leprecan family. It depends on Fe cation as a cofactor. Requires L-ascorbate as cofactor. Post-translationally, O-glycosylated; chondroitin sulfate. In terms of tissue distribution, expressed in basement membranes of cardiac muscle, skeletal muscle, central nervous system, intestinal tract, trachea, ear, skin, liver and kidney. In kidney, localizes to the glomerular basement membrane, mesangial matrix and Bowman's capsule of the nephron. In the renal parenchyma, expressed in the basement membranes of tubules and blood vessels. In the ear and trachea, localizes to the perimeter of resident chondrocytes in lacunae.

The protein localises to the endoplasmic reticulum. Its subcellular location is the secreted. It localises to the extracellular space. It is found in the extracellular matrix. The catalysed reaction is L-prolyl-[collagen] + 2-oxoglutarate + O2 = trans-3-hydroxy-L-prolyl-[collagen] + succinate + CO2. Its function is as follows. Basement membrane-associated chondroitin sulfate proteoglycan (CSPG). Has prolyl 3-hydroxylase activity catalyzing the post-translational formation of 3-hydroxyproline in -Xaa-Pro-Gly- sequences in collagens, especially types IV and V. May be involved in the secretory pathway of cells. Has growth suppressive activity in fibroblasts. In Rattus norvegicus (Rat), this protein is Prolyl 3-hydroxylase 1.